The primary structure comprises 673 residues: MAPFLRISFNSYELGSLQAEDDASQPFCAVKMKEALTTDRGKTLVQKKPTMYPEWKSTFDAHIYEGRVIQIVLMRAAEDPMSEVTVGVSVLAERCKKNNGKAEFWLDLQPQAKVLMCVQYFLEDGDCKQSMRSEEEAMFPTMNRRGAIKQAKIHYIKNHEFIATFFGQPTFCSVCKEFVWGLNKQGYKCRQCNAAIHKKCIDKIIGRCTGTATNSRDTIFQKERFNIDMPHRFKVYNYMSPTFCDHCGTLLWGLVKQGLKCEDCGMNVHHKCREKVANLCGINQKLLAEALNQVTQKASRKPETPETVGIYQGFEKKTAVSGNDIPDNNGTYGKIWEGSNRCRLENFTFQKVLGKGSFGKVLLAELKGKERYFAIKYLKKDVVLIDDDVECTMVEKRVLALAWENPFLTHLICTFQTKDHLFFVMEFLNGGDLMFHIQDKGRFELYRATFYAAEIICGLQFLHGKGIIYRDLKLDNVMLDKDGHIKIADFGMCKENIFGENRASTFCGTPDYIAPEILQGLKYSFSVDWWSFGVLLYEMLIGQSPFHGDDEDELFESIRVDTPHYPRWITKESKDIMEKLFERDPAKRLGVTGNIRLHPFFKTINWNLLEKRKVEPPFKPKVKSPSDYSNFDPEFLNEKPQLSFSDKNLIDSMDQTAFKGFSFVNPKYEQFLE.

The C2 domain maps to 1–106 (MAPFLRISFN…KNNGKAEFWL (106 aa)). Phosphothreonine occurs at positions 43 and 50. Tyr-64 is modified (phosphotyrosine). Ser-130 carries the phosphoserine modification. Thr-141 carries the post-translational modification Phosphothreonine. Tyr-155 bears the Phosphotyrosine mark. The segment at 158–208 (NHEFIATFFGQPTFCSVCKEFVWGLNKQGYKCRQCNAAIHKKCIDKIIGRC) adopts a Phorbol-ester/DAG-type 1 zinc-finger fold. Thr-218 carries the phosphothreonine modification. Residues 230-280 (PHRFKVYNYMSPTFCDHCGTLLWGLVKQGLKCEDCGMNVHHKCREKVANLC) form a Phorbol-ester/DAG-type 2 zinc finger. Ser-299 carries the phosphoserine; by autocatalysis modification. A phosphotyrosine; by SRC mark is found at Tyr-311 and Tyr-332. In terms of domain architecture, Protein kinase spans 347–601 (FTFQKVLGKG…TGNIRLHPFF (255 aa)). 353–361 (LGKGSFGKV) provides a ligand contact to ATP. Phosphotyrosine is present on Tyr-372. Lys-376 contacts ATP. Thr-449 bears the Phosphothreonine mark. Residue Asp-471 is the Proton acceptor of the active site. Ser-504 is subject to Phosphoserine. A Phosphothreonine; by autocatalysis modification is found at Thr-505. At Tyr-565 the chain carries Phosphotyrosine. The region spanning 602-673 (KTINWNLLEK…VNPKYEQFLE (72 aa)) is the AGC-kinase C-terminal domain. 3 positions are modified to phosphoserine: Ser-643, Ser-652, and Ser-662.

Belongs to the protein kinase superfamily. AGC Ser/Thr protein kinase family. PKC subfamily. Interacts with PDPK1 (via N-terminal region). Interacts with RAD9A. Interacts with CDCP1. Interacts with MUC1. Interacts with VASP. Interacts with CAVIN3. Interacts with PRKD2 (via N-terminus and zing-finger domain 1 and 2) in response to oxidative stress; the interaction is independent of PRKD2 tyrosine phosphorylation. Interacts with PLSC3; interaction is enhanced by UV irradiation. In terms of processing, autophosphorylated and/or phosphorylated at Thr-505, within the activation loop; phosphorylation at Thr-505 is not a prerequisite for enzymatic activity. Autophosphorylated at Ser-299. Upon TNFSF10/TRAIL treatment, phosphorylated at Tyr-155; phosphorylation is required for its translocation to the endoplasmic reticulum and cleavage by caspase-3. Phosphorylated at Tyr-311, Tyr-332 and Tyr-565; phosphorylation of Tyr-311 and Tyr-565 following thrombin or zymosan stimulation potentiates its kinase activity. Phosphorylated by protein kinase PDPK1; phosphorylation is inhibited by the apoptotic C-terminal cleavage product of PKN2. Phosphorylated at Tyr-311 and Tyr-332 by SRC; phosphorylation leads to enhanced autophosphorylation at Thr-505. Phosphorylated at Tyr-311 through a SYK and SRC mechanism downstream of C-type lectin receptors activation, promoting its activation. Proteolytically cleaved into a catalytic subunit and a regulatory subunit by caspase-3 during apoptosis which results in kinase activation.

Its subcellular location is the cytoplasm. It is found in the nucleus. The protein localises to the perinuclear region. It localises to the cell membrane. The protein resides in the mitochondrion. Its subcellular location is the endomembrane system. The catalysed reaction is L-seryl-[protein] + ATP = O-phospho-L-seryl-[protein] + ADP + H(+). It catalyses the reaction L-threonyl-[protein] + ATP = O-phospho-L-threonyl-[protein] + ADP + H(+). The enzyme catalyses L-tyrosyl-[protein] + ATP = O-phospho-L-tyrosyl-[protein] + ADP + H(+). With respect to regulation, novel PKCs (PRKCD, PRKCE, PRKCH and PRKCQ) are calcium-insensitive, but activated by diacylglycerol (DAG) and phosphatidylserine. Three specific sites; Thr-505 (activation loop of the kinase domain), Ser-643 (turn motif) and Ser-662 (hydrophobic region), need to be phosphorylated for its full activation. Activated by caspase-3 (CASP3) cleavage during apoptosis. After cleavage, the pseudosubstrate motif in the regulatory subunit is released from the substrate recognition site of the catalytic subunit, which enables PRKCD to become constitutively activated. The catalytic subunit which displays properties of a sphingosine-dependent protein kinase is activated by D-erythro-sphingosine (Sph) or N,N-dimethyl-D-erythrosphingosine (DMS) or N,N,N-trimethyl-D-erythrosphingosine (TMS), but not by ceramide or Sph-1-P and is strongly inhibited by phosphatidylserine. In terms of biological role, calcium-independent, phospholipid- and diacylglycerol (DAG)-dependent serine/threonine-protein kinase that plays contrasting roles in cell death and cell survival by functioning as a pro-apoptotic protein during DNA damage-induced apoptosis, but acting as an anti-apoptotic protein during cytokine receptor-initiated cell death, is involved in tumor suppression, is required for oxygen radical production by NADPH oxidase and acts as a positive or negative regulator in platelet functional responses. Upon DNA damage, activates the promoter of the death-promoting transcription factor BCLAF1/Btf to trigger BCLAF1-mediated p53/TP53 gene transcription and apoptosis. In response to oxidative stress, interact with and activate CHUK/IKKA in the nucleus, causing the phosphorylation of p53/TP53. In the case of ER stress or DNA damage-induced apoptosis, can form a complex with the tyrosine-protein kinase ABL1 which trigger apoptosis independently of p53/TP53. In cytosol can trigger apoptosis by activating MAPK11 or MAPK14, inhibiting AKT1 and decreasing the level of X-linked inhibitor of apoptosis protein (XIAP), whereas in nucleus induces apoptosis via the activation of MAPK8 or MAPK9. Upon ionizing radiation treatment, is required for the activation of the apoptosis regulators BAX and BAK, which trigger the mitochondrial cell death pathway. Can phosphorylate MCL1 and target it for degradation which is sufficient to trigger for BAX activation and apoptosis. Is required for the control of cell cycle progression both at G1/S and G2/M phases. Mediates phorbol 12-myristate 13-acetate (PMA)-induced inhibition of cell cycle progression at G1/S phase by up-regulating the CDK inhibitor CDKN1A/p21 and inhibiting the cyclin CCNA2 promoter activity. In response to UV irradiation can phosphorylate CDK1, which is important for the G2/M DNA damage checkpoint activation. Can protect glioma cells from the apoptosis induced by TNFSF10/TRAIL, probably by inducing increased phosphorylation and subsequent activation of AKT1. Can also act as tumor suppressor upon mitogenic stimulation with PMA or TPA. In N-formyl-methionyl-leucyl-phenylalanine (fMLP)-treated cells, is required for NCF1 (p47-phox) phosphorylation and activation of NADPH oxidase activity, and regulates TNF-elicited superoxide anion production in neutrophils, by direct phosphorylation and activation of NCF1 or indirectly through MAPK1/3 (ERK1/2) signaling pathways. Involved in antifungal immunity by mediating phosphorylation and activation of CARD9 downstream of C-type lectin receptors activation, promoting interaction between CARD9 and BCL10, followed by activation of NF-kappa-B and MAP kinase p38 pathways. May also play a role in the regulation of NADPH oxidase activity in eosinophil after stimulation with IL5, leukotriene B4 or PMA. In collagen-induced platelet aggregation, acts a negative regulator of filopodia formation and actin polymerization by interacting with and negatively regulating VASP phosphorylation. Downstream of PAR1, PAR4 and CD36/GP4 receptors, regulates differentially platelet dense granule secretion; acts as a positive regulator in PAR-mediated granule secretion, whereas it negatively regulates CD36/GP4-mediated granule release. Phosphorylates MUC1 in the C-terminal and regulates the interaction between MUC1 and beta-catenin. The catalytic subunit phosphorylates 14-3-3 proteins (YWHAB, YWHAZ and YWHAH) in a sphingosine-dependent fashion. Phosphorylates ELAVL1 in response to angiotensin-2 treatment. Phosphorylates mitochondrial phospholipid scramblase 3 (PLSCR3), resulting in increased cardiolipin expression on the mitochondrial outer membrane which facilitates apoptosis. Phosphorylates SMPD1 which induces SMPD1 secretion. Truncated isoform 2 is inactive. This is Protein kinase C delta type from Rattus norvegicus (Rat).